A 486-amino-acid polypeptide reads, in one-letter code: 2-isopropylmalate synthase (486 aa).

Positions 4–266 (VYIFDTTLRD…KTDVNLKEIA (263 aa)) constitute a Pyruvate carboxyltransferase domain. Mn(2+) is bound by residues D13, H201, H203, and N237. Residues 390 to 486 (KVEIIHVTSG…LSTDIIEASA (97 aa)) are regulatory domain.

This sequence belongs to the alpha-IPM synthase/homocitrate synthase family. LeuA type 1 subfamily. It depends on Mn(2+) as a cofactor.

It is found in the cytoplasm. It carries out the reaction 3-methyl-2-oxobutanoate + acetyl-CoA + H2O = (2S)-2-isopropylmalate + CoA + H(+). The protein operates within amino-acid biosynthesis; L-leucine biosynthesis; L-leucine from 3-methyl-2-oxobutanoate: step 1/4. In terms of biological role, catalyzes the condensation of the acetyl group of acetyl-CoA with 3-methyl-2-oxobutanoate (2-ketoisovalerate) to form 3-carboxy-3-hydroxy-4-methylpentanoate (2-isopropylmalate). The chain is 2-isopropylmalate synthase from Pyrococcus abyssi (strain GE5 / Orsay).